Consider the following 118-residue polypeptide: Large ribosomal subunit protein uL24 (118 aa).

The protein belongs to the universal ribosomal protein uL24 family. As to quaternary structure, part of the 50S ribosomal subunit.

In terms of biological role, one of two assembly initiator proteins, it binds directly to the 5'-end of the 23S rRNA, where it nucleates assembly of the 50S subunit. One of the proteins that surrounds the polypeptide exit tunnel on the outside of the subunit. This chain is Large ribosomal subunit protein uL24, found in Synechococcus sp. (strain CC9605).